The following is a 363-amino-acid chain: Flagellar P-ring protein (363 aa).

Residues 1–20 (MKLKLFLLSVLLLVSGSSQA) form the signal peptide.

This sequence belongs to the FlgI family. The basal body constitutes a major portion of the flagellar organelle and consists of four rings (L,P,S, and M) mounted on a central rod.

It localises to the periplasm. It is found in the bacterial flagellum basal body. In terms of biological role, assembles around the rod to form the L-ring and probably protects the motor/basal body from shearing forces during rotation. The chain is Flagellar P-ring protein from Shewanella woodyi (strain ATCC 51908 / MS32).